Consider the following 134-residue polypeptide: MNIALIAHDNKKKMMINFTTAYELILLNHQLYATGTTGKRIMEETNLKVTRFQSGPLGGDQQIGAEIANNRMDVVIFLRDSLTAQPHEPDIQALIRLCDVHMIPVATNIATAEILIRALERGDLDWRERVKERG.

The 134-residue stretch at 1-134 (MNIALIAHDN…DWRERVKERG (134 aa)) folds into the MGS-like domain. Residues His8, Lys12, 34–37 (TGTT), and 54–55 (SG) each bind substrate. The active-site Proton donor/acceptor is the Asp60. Position 87 (His87) interacts with substrate.

The protein belongs to the methylglyoxal synthase family.

The catalysed reaction is dihydroxyacetone phosphate = methylglyoxal + phosphate. Catalyzes the formation of methylglyoxal from dihydroxyacetone phosphate. The sequence is that of Methylglyoxal synthase from Alkaliphilus metalliredigens (strain QYMF).